The following is a 62-amino-acid chain: Large ribosomal subunit protein uL30 (62 aa).

This sequence belongs to the universal ribosomal protein uL30 family. Part of the 50S ribosomal subunit.

The polypeptide is Large ribosomal subunit protein uL30 (Staphylococcus carnosus (strain TM300)).